Here is a 507-residue protein sequence, read N- to C-terminus: MKVKPVTVTGSSLTIEDVVAVARHGAEVKLSADAKKRIKDSKKIVDDIVKSGKPTYGISTGFGELSTVTITKDQNGALQRNLILSHACGVGNPFPEDIVRAIMLLRLNTHASGFSGVTPSVPDILVDMLNKGVIPYVPEKGSLGASGDLANLAHIALVMIGEGKAYYEGKLMEGKAALAKAGLKPVVLSGKDGLGIINGTPVMSGIGALALHDAEQLLKAANMGASLVFEAFRGITAALDPRIHKSRPHKGQIDTAAFILKMLKGSSSINTRENDVQDPYTLRCVPQVHGASADAIAYVRKVLEIEINAVTDNPLVFPDNHDVISGGNFHGQPIAITMDFLGIAVSELANISERRIERLVNPQLNGGLPAFLIENGGVNSGFMIPQYTAASLVSENKVLAHPASVDSITSSGNKEDHVSMGTTAARKITEIVKNVRHVLAIEWLTAAQACDLRGVKKYGKGTGEMMKLIRKHISKVTEDRILYNDIMKALEIISNDENIDMIENAAK.

The 5-imidazolinone (Ala-Gly) cross-link spans 145–147 (ASG). Serine 146 is modified (2,3-didehydroalanine (Ser)).

The protein belongs to the PAL/histidase family. Post-translationally, contains an active site 4-methylidene-imidazol-5-one (MIO), which is formed autocatalytically by cyclization and dehydration of residues Ala-Ser-Gly.

The protein localises to the cytoplasm. It carries out the reaction L-histidine = trans-urocanate + NH4(+). It functions in the pathway amino-acid degradation; L-histidine degradation into L-glutamate; N-formimidoyl-L-glutamate from L-histidine: step 1/3. The protein is Histidine ammonia-lyase of Treponema denticola (strain ATCC 35405 / DSM 14222 / CIP 103919 / JCM 8153 / KCTC 15104).